A 403-amino-acid polypeptide reads, in one-letter code: TPR repeat-containing protein Synpcc7942_0270 (403 aa).

TPR repeat units follow at residues 208–243, 244–282, 283–316, 317–350, and 351–387; these read AYLC…PEPA, VRYE…AIHK, LGAW…APQA, TVAL…DPND, and PSLY…QGSP.

The sequence is that of TPR repeat-containing protein Synpcc7942_0270 from Synechococcus elongatus (strain ATCC 33912 / PCC 7942 / FACHB-805) (Anacystis nidulans R2).